Consider the following 302-residue polypeptide: Ribose-5-phosphate isomerase (302 aa).

The protein belongs to the ribose 5-phosphate isomerase family.

The protein localises to the cytoplasm. The enzyme catalyses aldehydo-D-ribose 5-phosphate = D-ribulose 5-phosphate. The protein operates within carbohydrate degradation; pentose phosphate pathway; D-ribose 5-phosphate from D-ribulose 5-phosphate (non-oxidative stage): step 1/1. In Cryptococcus neoformans var. neoformans serotype D (strain B-3501A) (Filobasidiella neoformans), this protein is Ribose-5-phosphate isomerase (RKI1).